The sequence spans 98 residues: NADH-ubiquinone oxidoreductase chain 4L (98 aa).

The next 3 membrane-spanning stretches (helical) occupy residues 1-21, 28-48, and 59-79; these read MMPISLSLTMAFSLALAGTLI, STLLCLEGMMLSLFILMAMLI, and APLILLVFSACEAGIGLALLV.

Belongs to the complex I subunit 4L family. Core subunit of respiratory chain NADH dehydrogenase (Complex I) which is composed of 45 different subunits.

Its subcellular location is the mitochondrion inner membrane. It catalyses the reaction a ubiquinone + NADH + 5 H(+)(in) = a ubiquinol + NAD(+) + 4 H(+)(out). Its function is as follows. Core subunit of the mitochondrial membrane respiratory chain NADH dehydrogenase (Complex I) which catalyzes electron transfer from NADH through the respiratory chain, using ubiquinone as an electron acceptor. Part of the enzyme membrane arm which is embedded in the lipid bilayer and involved in proton translocation. In Petaurus breviceps (Australian sugar glider), this protein is NADH-ubiquinone oxidoreductase chain 4L (MT-ND4L).